The sequence spans 501 residues: Aspartate--tRNA ligase, cytoplasmic (501 aa).

Thr-52 carries the post-translational modification Phosphothreonine. Lys-74 carries the N6-acetyllysine modification. Glu-229 contributes to the L-aspartate binding site. Position 249 is a phosphoserine (Ser-249). Residues 251–254 are aspartate; it reads QLYK. Residue Arg-273 participates in L-aspartate binding. ATP-binding positions include 273–275 and 281–283; these read RAE and RHL. Lys-374 carries the post-translational modification N6-acetyllysine. Positions 411-415 are binding site for the 3'-end of tRNA; the sequence is KQSNS. Position 424 (Glu-424) interacts with ATP. 2 residues coordinate L-aspartate: Ser-427 and Arg-431. 472–475 serves as a coordination point for ATP; it reads GLER. Thr-500 bears the Phosphothreonine; by PKA mark.

This sequence belongs to the class-II aminoacyl-tRNA synthetase family. Type 2 subfamily. In terms of assembly, homodimer. Part of a multisubunit complex that groups tRNA ligases for Arg (RARS1), Asp (DARS1), Gln (QARS1), Ile (IARS1), Leu (LARS1), Lys (KARS1), Met (MARS1) the bifunctional ligase for Glu and Pro (EPRS1) and the auxiliary subunits AIMP1/p43, AIMP2/p38 and EEF1E1/p18.

The protein resides in the cytoplasm. It carries out the reaction tRNA(Asp) + L-aspartate + ATP = L-aspartyl-tRNA(Asp) + AMP + diphosphate. Functionally, catalyzes the specific attachment of an amino acid to its cognate tRNA in a 2 step reaction: the amino acid (AA) is first activated by ATP to form AA-AMP and then transferred to the acceptor end of the tRNA. This is Aspartate--tRNA ligase, cytoplasmic (DARS1) from Pongo abelii (Sumatran orangutan).